The chain runs to 105 residues: UPF0145 protein lpl0253 (105 aa).

It belongs to the UPF0145 family.

In Legionella pneumophila (strain Lens), this protein is UPF0145 protein lpl0253.